Consider the following 455-residue polypeptide: NADH-quinone oxidoreductase subunit N (455 aa).

A run of 11 helical transmembrane segments spans residues 25 to 45, 61 to 81, 99 to 119, 149 to 169, 193 to 213, 257 to 277, 285 to 305, 312 to 332, 355 to 375, 391 to 411, and 432 to 452; these read AIVPITIIGLLAIFGFNISEY, FSVAFSSLFIIITVFLVALSH, VFLLSGAVAMVSFGNLSMFFL, FLMGSFASGIILFGICLIYGA, IGIVFLLIGMLFKIATVPFHF, IQIIIVCVAIASMLLGNIMAL, MFAFSGISHAGFMVSTLLLTS, LYYASAYAIAGIAFFAVVMYV, AGILTAALLSMAGIPVLSGFF, IVVFVAIISSIISVGYYFKII, and IVAVVALILNIALGLFPNVVL.

Belongs to the complex I subunit 2 family. In terms of assembly, NDH-1 is composed of 14 different subunits. Subunits NuoA, H, J, K, L, M, N constitute the membrane sector of the complex.

It localises to the cell inner membrane. The catalysed reaction is a quinone + NADH + 5 H(+)(in) = a quinol + NAD(+) + 4 H(+)(out). NDH-1 shuttles electrons from NADH, via FMN and iron-sulfur (Fe-S) centers, to quinones in the respiratory chain. The immediate electron acceptor for the enzyme in this species is believed to be a menaquinone. Couples the redox reaction to proton translocation (for every two electrons transferred, four hydrogen ions are translocated across the cytoplasmic membrane), and thus conserves the redox energy in a proton gradient. The polypeptide is NADH-quinone oxidoreductase subunit N (Flavobacterium psychrophilum (strain ATCC 49511 / DSM 21280 / CIP 103535 / JIP02/86)).